The following is an 820-amino-acid chain: Probable protease Ga0182885_104520 (820 aa).

The protein belongs to the peptidase C25 family.

Functionally, probably a dedicated protease for substrate gasdermin bGSDM; cleaves the bGSDM precursor, releasing the pore-forming moiety, which integrates into the membrane and triggers cell death. Involved in defense against bacteriophages. Expression of bacterial gasdermin (bGSDM) and this neighboring protease is toxic in E.coli. The chain is Probable protease Ga0182885_104520 from Desulfuromonadales bacterium.